Reading from the N-terminus, the 258-residue chain is Gamma-secretase subunit Aph-1b (258 aa).

Helical transmembrane passes span V3–F23, V32–V52, G70–Y90, A118–L138, A161–A181, W187–N207, and L214–G234.

It belongs to the APH-1 family. Component of the gamma-secretase complex, a complex composed of a presenilin homodimer (PSEN1 or PSEN2), nicastrin (NCSTN), APH1 and PEN2.

The protein localises to the membrane. Essential subunit of the gamma-secretase complex, an endoprotease complex that catalyzes the intramembrane cleavage of integral proteins such as Notch receptors. It may represent a stabilizing cofactor for the presenilin homodimer that promotes the formation of a stable complex. The chain is Gamma-secretase subunit Aph-1b (aph1b) from Danio rerio (Zebrafish).